The chain runs to 357 residues: UDP-N-acetylglucosamine--N-acetylmuramyl-(pentapeptide) pyrophosphoryl-undecaprenol N-acetylglucosamine transferase (357 aa).

UDP-N-acetyl-alpha-D-glucosamine contacts are provided by residues 13 to 15 (TGG), asparagine 125, arginine 161, serine 189, isoleucine 243, and glutamine 288.

Belongs to the glycosyltransferase 28 family. MurG subfamily.

Its subcellular location is the cell inner membrane. It catalyses the reaction di-trans,octa-cis-undecaprenyl diphospho-N-acetyl-alpha-D-muramoyl-L-alanyl-D-glutamyl-meso-2,6-diaminopimeloyl-D-alanyl-D-alanine + UDP-N-acetyl-alpha-D-glucosamine = di-trans,octa-cis-undecaprenyl diphospho-[N-acetyl-alpha-D-glucosaminyl-(1-&gt;4)]-N-acetyl-alpha-D-muramoyl-L-alanyl-D-glutamyl-meso-2,6-diaminopimeloyl-D-alanyl-D-alanine + UDP + H(+). The protein operates within cell wall biogenesis; peptidoglycan biosynthesis. In terms of biological role, cell wall formation. Catalyzes the transfer of a GlcNAc subunit on undecaprenyl-pyrophosphoryl-MurNAc-pentapeptide (lipid intermediate I) to form undecaprenyl-pyrophosphoryl-MurNAc-(pentapeptide)GlcNAc (lipid intermediate II). In Bordetella pertussis (strain Tohama I / ATCC BAA-589 / NCTC 13251), this protein is UDP-N-acetylglucosamine--N-acetylmuramyl-(pentapeptide) pyrophosphoryl-undecaprenol N-acetylglucosamine transferase.